The primary structure comprises 138 residues: Putative pre-16S rRNA nuclease (138 aa).

This sequence belongs to the YqgF nuclease family.

The protein localises to the cytoplasm. Functionally, could be a nuclease involved in processing of the 5'-end of pre-16S rRNA. The sequence is that of Putative pre-16S rRNA nuclease from Caldicellulosiruptor bescii (strain ATCC BAA-1888 / DSM 6725 / KCTC 15123 / Z-1320) (Anaerocellum thermophilum).